The chain runs to 256 residues: Major prion protein (256 aa).

The first 24 residues, 1 to 24, serve as a signal peptide directing secretion; it reads MVKSHIGSWILVLFVAMWSDVGLC. Positions 25-233 are interaction with GRB2, ERI3 and SYN1; it reads KKRPKPGGGW…ESQAYYQRGA (209 aa). A disordered region spans residues 28 to 110; that stretch reads PKPGGGWNTG…QWNKPSKPKT (83 aa). Repeat copies occupy residues 54–62, 63–70, 71–78, 79–86, and 87–95. The segment at 54–95 is 5 X 8 AA tandem repeats of P-H-G-G-G-W-G-Q; the sequence is PQGGGGWGQPHGGGWGQPHGGGWGQPHGGGWGQPHGGGGWGQ. Over residues 55 to 97 the composition is skewed to gly residues; that stretch reads QGGGGWGQPHGGGWGQPHGGGWGQPHGGGWGQPHGGGGWGQGG. 12 residues coordinate Cu(2+): histidine 64, glycine 65, glycine 66, histidine 72, glycine 73, glycine 74, histidine 80, glycine 81, glycine 82, histidine 88, glycine 90, and glycine 91. Residues cysteine 182 and cysteine 217 are joined by a disulfide bond. N-linked (GlcNAc...) asparagine glycosylation is found at asparagine 184 and asparagine 200. Residue alanine 233 is the site of GPI-anchor amidated alanine attachment. Residues 234 to 256 constitute a propeptide, removed in mature form; it reads SVILFSPPPVILLISFLIFLIVG.

This sequence belongs to the prion family. In terms of assembly, monomer and homodimer. Has a tendency to aggregate into amyloid fibrils containing a cross-beta spine, formed by a steric zipper of superposed beta-strands. Soluble oligomers may represent an intermediate stage on the path to fibril formation. Copper binding may promote oligomerization. Interacts with GRB2, APP, ERI3/PRNPIP and SYN1. Mislocalized cytosolically exposed PrP interacts with MGRN1; this interaction alters MGRN1 subcellular location and causes lysosomal enlargement. Interacts with KIAA1191.

It localises to the cell membrane. The protein resides in the golgi apparatus. Its function is as follows. Its primary physiological function is unclear. Has cytoprotective activity against internal or environmental stresses. May play a role in neuronal development and synaptic plasticity. May be required for neuronal myelin sheath maintenance. May play a role in iron uptake and iron homeostasis. Soluble oligomers are toxic to cultured neuroblastoma cells and induce apoptosis (in vitro). Association with GPC1 (via its heparan sulfate chains) targets PRNP to lipid rafts. Also provides Cu(2+) or Zn(2+) for the ascorbate-mediated GPC1 deaminase degradation of its heparan sulfate side chains. The chain is Major prion protein (PRNP) from Capra hircus (Goat).